Reading from the N-terminus, the 128-residue chain is Sirohydrochlorin cobaltochelatase (128 aa).

The active-site Proton acceptor is H9. A Co(2+)-binding site is contributed by H9. Substrate-binding positions include K43 and 68–73; that span reads FATGTH. Co(2+) is bound at residue H73.

This sequence belongs to the CbiX family. CbiXS subfamily. Homotetramer; dimer of dimers.

It carries out the reaction Co-sirohydrochlorin + 2 H(+) = sirohydrochlorin + Co(2+). Its pathway is cofactor biosynthesis; adenosylcobalamin biosynthesis; cob(II)yrinate a,c-diamide from sirohydrochlorin (anaerobic route): step 1/10. In terms of biological role, catalyzes the insertion of Co(2+) into sirohydrochlorin as part of the anaerobic pathway to cobalamin biosynthesis. This Saccharolobus islandicus (strain Y.N.15.51 / Yellowstone #2) (Sulfolobus islandicus) protein is Sirohydrochlorin cobaltochelatase.